Consider the following 337-residue polypeptide: uncharacterized protein (337 aa).

This sequence belongs to the mimivirus R69 family.

This is an uncharacterized protein from Acanthamoeba polyphaga mimivirus (APMV).